A 298-amino-acid polypeptide reads, in one-letter code: Myozenin-1 (298 aa).

The disordered stretch occupies residues 1–34 (MPLSGTPAPNKKRKSSKLIMELTGGGQESSGLNL). Residue S82 is modified to Phosphoserine. The segment at 105–173 (FSYSKGSSGG…TGTGDQAGGE (69 aa)) is disordered. Residues 118–129 (GSSSAGQYGSGQ) are compositionally biased toward low complexity. A compositionally biased stretch (gly residues) spans 136-172 (SGSGSGGAGGPGSQTGRGGDAGTTGVGETGTGDQAGG).

This sequence belongs to the myozenin family. In terms of assembly, interacts with ACTN2, ACTN3, FLNA, FLNB, FLNC, LDB3, PPP3CA and TCAP. Interacts via its C-terminal region with MYOT.

The protein localises to the nucleus. Its subcellular location is the cell projection. It localises to the pseudopodium. In terms of biological role, myozenins may serve as intracellular binding proteins involved in linking Z-disk proteins such as alpha-actinin, gamma-filamin, TCAP/telethonin, LDB3/ZASP and localizing calcineurin signaling to the sarcomere. Plays an important role in the modulation of calcineurin signaling. May play a role in myofibrillogenesis. The polypeptide is Myozenin-1 (MYOZ1) (Sus scrofa (Pig)).